Here is a 123-residue protein sequence, read N- to C-terminus: Antitoxin RnlB (123 aa).

As to quaternary structure, can form a complex with cognate toxin RnlA. Probably degraded by CplXP and Lon proteases.

Its function is as follows. Antitoxin component of a type II toxin-antitoxin (TA) system. A labile antitoxin (half-life of 2.1 minutes) that inhibits the endonuclease activity of cognate toxin RnlA but not that of non-cognate toxin LsoA. The protein is Antitoxin RnlB (rnlB) of Escherichia coli (strain K12).